We begin with the raw amino-acid sequence, 968 residues long: Isoleucine--tRNA ligase (968 aa).

The short motif at 68 to 78 (PYANGALHMGH) is the 'HIGH' region element. Glu582 provides a ligand contact to L-isoleucyl-5'-AMP. A 'KMSKS' region motif is present at residues 623 to 627 (KMSKS). Lys626 provides a ligand contact to ATP. Residues Cys936, Cys939, Cys956, and Cys959 each coordinate Zn(2+).

Belongs to the class-I aminoacyl-tRNA synthetase family. IleS type 1 subfamily. Monomer. Zn(2+) is required as a cofactor.

It is found in the cytoplasm. It carries out the reaction tRNA(Ile) + L-isoleucine + ATP = L-isoleucyl-tRNA(Ile) + AMP + diphosphate. In terms of biological role, catalyzes the attachment of isoleucine to tRNA(Ile). As IleRS can inadvertently accommodate and process structurally similar amino acids such as valine, to avoid such errors it has two additional distinct tRNA(Ile)-dependent editing activities. One activity is designated as 'pretransfer' editing and involves the hydrolysis of activated Val-AMP. The other activity is designated 'posttransfer' editing and involves deacylation of mischarged Val-tRNA(Ile). This Prochlorococcus marinus (strain MIT 9301) protein is Isoleucine--tRNA ligase.